The following is an 808-amino-acid chain: Protein translocase subunit SecA (808 aa).

Residues Gln-87, Gly-105–Thr-109, and Asp-493 each bind ATP.

It belongs to the SecA family. Monomer and homodimer. Part of the essential Sec protein translocation apparatus which comprises SecA, SecYEG and auxiliary proteins SecDF. Other proteins may also be involved.

The protein localises to the cell membrane. Its subcellular location is the cytoplasm. The enzyme catalyses ATP + H2O + cellular proteinSide 1 = ADP + phosphate + cellular proteinSide 2.. Part of the Sec protein translocase complex. Interacts with the SecYEG preprotein conducting channel. Has a central role in coupling the hydrolysis of ATP to the transfer of proteins into and across the cell membrane, serving as an ATP-driven molecular motor driving the stepwise translocation of polypeptide chains across the membrane. This chain is Protein translocase subunit SecA, found in Mycoplasma pneumoniae (strain ATCC 29342 / M129 / Subtype 1) (Mycoplasmoides pneumoniae).